Consider the following 345-residue polypeptide: Thylakoid lumenal 29 kDa protein, chloroplastic (345 aa).

This sequence belongs to the peroxidase family.

The protein localises to the plastid. It localises to the chloroplast thylakoid lumen. The sequence is that of Thylakoid lumenal 29 kDa protein, chloroplastic (CLEB3J9) from Solanum lycopersicum (Tomato).